We begin with the raw amino-acid sequence, 158 residues long: MSGAGAPGAAERIDGTGLRVVIVAGAWHEEIANGLIAGAERTLEAAGASWSIARVPGSFELPVASKAALEAGADAVVALGVIIRGGTPHFEYVSAAATDGLTRVALNTGKPVGFGVLTLDDEAQGLDRAGLPGSTEDKGAEAAHAALATAVALRALRG.

Residues Trp27, 58–60 (SFE), and 81–83 (VII) contribute to the 5-amino-6-(D-ribitylamino)uracil site. A (2S)-2-hydroxy-3-oxobutyl phosphate-binding site is contributed by 86–87 (GT). His89 functions as the Proton donor in the catalytic mechanism. 5-amino-6-(D-ribitylamino)uracil is bound at residue Phe114. Residue Arg128 coordinates (2S)-2-hydroxy-3-oxobutyl phosphate.

The protein belongs to the DMRL synthase family.

It carries out the reaction (2S)-2-hydroxy-3-oxobutyl phosphate + 5-amino-6-(D-ribitylamino)uracil = 6,7-dimethyl-8-(1-D-ribityl)lumazine + phosphate + 2 H2O + H(+). Its pathway is cofactor biosynthesis; riboflavin biosynthesis; riboflavin from 2-hydroxy-3-oxobutyl phosphate and 5-amino-6-(D-ribitylamino)uracil: step 1/2. Catalyzes the formation of 6,7-dimethyl-8-ribityllumazine by condensation of 5-amino-6-(D-ribitylamino)uracil with 3,4-dihydroxy-2-butanone 4-phosphate. This is the penultimate step in the biosynthesis of riboflavin. This is 6,7-dimethyl-8-ribityllumazine synthase from Leifsonia xyli subsp. xyli (strain CTCB07).